Consider the following 158-residue polypeptide: 6,7-dimethyl-8-ribityllumazine synthase (158 aa).

5-amino-6-(D-ribitylamino)uracil is bound by residues F22, 57-59 (AVE), and 81-83 (AVI). Position 86–87 (86–87 (GT)) interacts with (2S)-2-hydroxy-3-oxobutyl phosphate. The active-site Proton donor is the H89. F114 is a binding site for 5-amino-6-(D-ribitylamino)uracil. R128 serves as a coordination point for (2S)-2-hydroxy-3-oxobutyl phosphate.

Belongs to the DMRL synthase family. As to quaternary structure, forms an icosahedral capsid composed of 60 subunits, arranged as a dodecamer of pentamers.

The catalysed reaction is (2S)-2-hydroxy-3-oxobutyl phosphate + 5-amino-6-(D-ribitylamino)uracil = 6,7-dimethyl-8-(1-D-ribityl)lumazine + phosphate + 2 H2O + H(+). Its pathway is cofactor biosynthesis; riboflavin biosynthesis; riboflavin from 2-hydroxy-3-oxobutyl phosphate and 5-amino-6-(D-ribitylamino)uracil: step 1/2. Functionally, catalyzes the formation of 6,7-dimethyl-8-ribityllumazine by condensation of 5-amino-6-(D-ribitylamino)uracil with 3,4-dihydroxy-2-butanone 4-phosphate. This is the penultimate step in the biosynthesis of riboflavin. The chain is 6,7-dimethyl-8-ribityllumazine synthase from Shewanella frigidimarina (strain NCIMB 400).